The sequence spans 209 residues: BAG family molecular chaperone regulator 1 (209 aa).

The 78-residue stretch at C7–M84 folds into the Ubiquitin-like domain. The 87-residue stretch at T107–L193 folds into the BAG domain.

As to quaternary structure, homodimer or homotetramer.

May inhibit the chaperone activity of HSP70/HSC70 by promoting substrate release in an ATP-dependent manner. The polypeptide is BAG family molecular chaperone regulator 1 (bag-1) (Caenorhabditis briggsae).